Reading from the N-terminus, the 225-residue chain is Uridylate kinase (225 aa).

An ATP-binding site is contributed by 9-10 (GS). Glycine 46 lines the UMP pocket. The ATP site is built by glycine 47 and arginine 51. UMP contacts are provided by residues aspartate 67 and 115-121 (THPAHTT). Residues threonine 141, asparagine 142, tyrosine 147, and aspartate 150 each coordinate ATP.

It belongs to the UMP kinase family. In terms of assembly, homohexamer.

It is found in the cytoplasm. It carries out the reaction UMP + ATP = UDP + ADP. Its pathway is pyrimidine metabolism; CTP biosynthesis via de novo pathway; UDP from UMP (UMPK route): step 1/1. With respect to regulation, inhibited by UTP. In terms of biological role, catalyzes the reversible phosphorylation of UMP to UDP. In Methanococcus aeolicus (strain ATCC BAA-1280 / DSM 17508 / OCM 812 / Nankai-3), this protein is Uridylate kinase.